The chain runs to 232 residues: Large ribosomal subunit protein uL1 (232 aa).

It belongs to the universal ribosomal protein uL1 family. Part of the 50S ribosomal subunit.

Binds directly to 23S rRNA. The L1 stalk is quite mobile in the ribosome, and is involved in E site tRNA release. Its function is as follows. Protein L1 is also a translational repressor protein, it controls the translation of the L11 operon by binding to its mRNA. This Chelativorans sp. (strain BNC1) protein is Large ribosomal subunit protein uL1.